The primary structure comprises 511 residues: Ribosome biogenesis protein YTM1 (511 aa).

Residues valine 9 to arginine 112 form a ubiquitin-like (UBL) domain region. A sufficient for interaction with ERB1 and association with 66S pre-ribosomes region spans residues serine 122–alanine 511. WD repeat units lie at residues serine 124 to leucine 168, glycine 170 to lysine 208, glycine 248 to isoleucine 287, glycine 332 to serine 372, threonine 383 to threonine 423, glycine 429 to valine 470, and threonine 477 to alanine 511. Positions arginine 207–glutamate 228 are disordered. Residues lysine 208 to asparagine 219 are compositionally biased toward basic and acidic residues.

The protein belongs to the WD repeat WDR12/YTM1 family. As to quaternary structure, component of the NOP7 complex, composed of ERB1, NOP7 and YTM1. The complex is held together by ERB1, which interacts with NOP7 via its N-terminal domain and with YTM1 via a high-affinity interaction between the seven-bladed beta-propeller domains of the 2 proteins. The NOP7 complex associates with the 66S pre-ribosome. Interacts (via UBL domain) with MDN1 (via VWFA/MIDAS domain).

Its subcellular location is the nucleus. The protein resides in the nucleolus. It is found in the nucleoplasm. Component of the NOP7 complex, which is required for maturation of the 25S and 5.8S ribosomal RNAs and formation of the 60S ribosome. The polypeptide is Ribosome biogenesis protein YTM1 (Yarrowia lipolytica (strain CLIB 122 / E 150) (Yeast)).